A 344-amino-acid chain; its full sequence is DNA-directed RNA polymerase subunit alpha (344 aa).

The interval 1 to 238 is alpha N-terminal domain (alpha-NTD); the sequence is MKVIKTAPLI…KQLGVFGERP (238 aa). The alpha C-terminal domain (alpha-CTD) stretch occupies residues 254–344; sequence AKDLSAKIES…EKLEDKGGND (91 aa).

The protein belongs to the RNA polymerase alpha chain family. In terms of assembly, homodimer. The RNAP catalytic core consists of 2 alpha, 1 beta, 1 beta' and 1 omega subunit. When a sigma factor is associated with the core the holoenzyme is formed, which can initiate transcription.

The catalysed reaction is RNA(n) + a ribonucleoside 5'-triphosphate = RNA(n+1) + diphosphate. DNA-dependent RNA polymerase catalyzes the transcription of DNA into RNA using the four ribonucleoside triphosphates as substrates. The chain is DNA-directed RNA polymerase subunit alpha from Helicobacter pylori (strain ATCC 700392 / 26695) (Campylobacter pylori).